Consider the following 418-residue polypeptide: D-amino acid dehydrogenase (418 aa).

3-17 provides a ligand contact to FAD; that stretch reads VLVLGAGVAGVSSAW.

It belongs to the DadA oxidoreductase family. FAD is required as a cofactor.

The enzyme catalyses a D-alpha-amino acid + A + H2O = a 2-oxocarboxylate + AH2 + NH4(+). The protein operates within amino-acid degradation; D-alanine degradation; NH(3) and pyruvate from D-alanine: step 1/1. In terms of biological role, oxidative deamination of D-amino acids. In Neisseria meningitidis serogroup C (strain 053442), this protein is D-amino acid dehydrogenase.